Reading from the N-terminus, the 226-residue chain is Phosphoglycolate phosphatase (226 aa).

Asp-9 serves as the catalytic Nucleophile. Residues Asp-9 and Asp-11 each contribute to the Mg(2+) site. Substrate is bound at residue Lys-150. Mg(2+)-binding residues include Asp-173 and Asp-177.

This sequence belongs to the archaeal SPP-like hydrolase family. Mg(2+) serves as cofactor.

The catalysed reaction is 2-phosphoglycolate + H2O = glycolate + phosphate. In terms of biological role, catalyzes the dephosphorylation of 2-phosphoglycolate. The chain is Phosphoglycolate phosphatase from Methanosarcina mazei (strain ATCC BAA-159 / DSM 3647 / Goe1 / Go1 / JCM 11833 / OCM 88) (Methanosarcina frisia).